We begin with the raw amino-acid sequence, 533 residues long: DNA-directed RNA polymerase III subunit RPC3 (533 aa).

The segment at 161-183 (PLVPDTDSSDPGPPPPAPNLVIN) is disordered. Position 194 is a phosphoserine (Ser194). The tract at residues 197–228 (GKGKRRRSSDEDAAGEPKAKKPRCTDNEEPTP) is disordered. Residues 211-222 (GEPKAKKPRCTD) show a composition bias toward basic and acidic residues.

The protein belongs to the eukaryotic RPC3/POLR3C RNA polymerase subunit family. As to quaternary structure, component of the RNA polymerase III complex consisting of 17 subunits: a ten-subunit horseshoe-shaped catalytic core composed of POLR3A/RPC1, POLR3B/RPC2, POLR1C/RPAC1, POLR1D/RPAC2, POLR3K/RPC10, POLR2E/RPABC1, POLR2F/RPABC2, POLR2H/RPABC3, POLR2K/RPABC4 and POLR2L/RPABC5; a mobile stalk composed of two subunits POLR3H/RPC8 and CRCP/RPC9, protruding from the core and functioning primarily in transcription initiation; and additional subunits homologous to general transcription factors of the RNA polymerase II machinery, POLR3C/RPC3-POLR3F/RPC6-POLR3G/RPC7 heterotrimer required for transcription initiation and POLR3D/RPC4-POLR3E/RPC5 heterodimer involved in both transcription initiation and termination. Directly interacts with POLR3G/RPC7 and POLR3GL. Directly interacts with POLR3F/RPC6. Interacts with GTF3C4. As part of the RNA polymerase III complex, interacts with PKP2.

Its subcellular location is the nucleus. DNA-dependent RNA polymerase catalyzes the transcription of DNA into RNA using the four ribonucleoside triphosphates as substrates. Specific peripheric component of RNA polymerase III (Pol III) which synthesizes small non-coding RNAs including 5S rRNA, snRNAs, tRNAs and miRNAs from at least 500 distinct genomic loci. Part of POLR3C/RPC3-POLR3F/RPC6-POLR3G/RPC7 heterotrimer, coordinates the dynamics of Pol III stalk and clamp modules during the transition from apo to elongation state. Pol III plays a key role in sensing and limiting infection by intracellular bacteria and DNA viruses. Acts as a nuclear and cytosolic DNA sensor involved in innate immune response. Can sense non-self dsDNA that serves as template for transcription into dsRNA. The non-self RNA polymerase III transcripts, such as Epstein-Barr virus-encoded RNAs (EBERs) induce type I interferon and NF-kappa-B through the RIG-I pathway. Preferentially binds single-stranded DNA (ssDNA) in a sequence-independent manner. The chain is DNA-directed RNA polymerase III subunit RPC3 from Rattus norvegicus (Rat).